Here is a 293-residue protein sequence, read N- to C-terminus: N(1)-aminopropylagmatine ureohydrolase (293 aa).

Residues His-105, Asp-128, His-130, Asp-132, Asp-210, and Asp-212 each coordinate Mn(2+).

The protein belongs to the arginase family. The cofactor is Mn(2+).

The protein localises to the cytoplasm. The enzyme catalyses N(1)-(3-aminopropyl)agmatine + H2O = urea + spermidine. The protein operates within amine and polyamine biosynthesis; spermidine biosynthesis. Its function is as follows. Involved in the biosynthesis of polyamines which are thought to support the growth of thermophilic microorganisms under high-temperature conditions. It seems that long-chain and branched-chain of polyamines effectively stabilize DNA and RNA, respectively. Catalyzes the decarboxylation of N1-(3-aminopropyl)agmatine to yield spermidine and urea. It cannot use agmatine as substrate. This Thermus thermophilus (strain ATCC 27634 / DSM 579 / HB8) protein is N(1)-aminopropylagmatine ureohydrolase.